The primary structure comprises 391 residues: MIRRSAVSRVVAEGSAIASDSGFALGASQYDAVVLLSFGGPEGPEDVVPFLKKVTSGRGVPDERLYEVAEHYNHFSGISPINDCNRRLRGALEKELFSRGIRIPVLWANRNWQPQLEEVLREAYDRGFRAFLTLFTSAYSCYSSCRQYREDIAHAVERAGLSGRIIVDKLRQFFDHPGFVLPFIEGIQDCLEQVKERGFKVSRTAILFSTHSIPELDAAFSGPEDAHFGKYGAYVSQHKAVVEVIMSRLRVTDPDLQNYQLVYQSRSGDPSTPWLEPDINDAIRVLRGCEAVLIVPLGFISDHMEVLWDLDNESMQTARECGLFAIRTPTPGTHPLYISGMVDLIVERLEGVPRSARPAMTDLGPWFDVCQPGCCKNSRSGFKPAYGGVAP.

Fe-coproporphyrin III-binding residues include Ser79 and Tyr148. Fe(2+) contacts are provided by His211 and Glu305.

It belongs to the ferrochelatase family.

It localises to the cytoplasm. It carries out the reaction Fe-coproporphyrin III + 2 H(+) = coproporphyrin III + Fe(2+). It participates in porphyrin-containing compound metabolism; protoheme biosynthesis. Functionally, involved in coproporphyrin-dependent heme b biosynthesis. Catalyzes the insertion of ferrous iron into coproporphyrin III to form Fe-coproporphyrin III. The polypeptide is Coproporphyrin III ferrochelatase (Tropheryma whipplei (strain TW08/27) (Whipple's bacillus)).